A 433-amino-acid chain; its full sequence is ATP-dependent protease ATPase subunit HslU (433 aa).

ATP-binding positions include Val-18, 60-65 (GVGKTE), Asp-246, Glu-311, and Arg-383.

This sequence belongs to the ClpX chaperone family. HslU subfamily. In terms of assembly, a double ring-shaped homohexamer of HslV is capped on each side by a ring-shaped HslU homohexamer. The assembly of the HslU/HslV complex is dependent on binding of ATP.

It localises to the cytoplasm. Its function is as follows. ATPase subunit of a proteasome-like degradation complex; this subunit has chaperone activity. The binding of ATP and its subsequent hydrolysis by HslU are essential for unfolding of protein substrates subsequently hydrolyzed by HslV. HslU recognizes the N-terminal part of its protein substrates and unfolds these before they are guided to HslV for hydrolysis. The chain is ATP-dependent protease ATPase subunit HslU from Rhodopseudomonas palustris (strain TIE-1).